The primary structure comprises 532 residues: Aspartate--tRNA ligase 1, cytoplasmic (532 aa).

Residues 7–41 (LEECGEKISKKESKKRAAKLEKLLRKQEREEATSS) are a coiled coil. Residues 31–58 (RKQEREEATSSSLSLEEEDESCSSNYGD) form a disordered region. Residues 88–169 (VSIRGRLHKN…QVEIHVRKMY (82 aa)) constitute a DNA-binding region (OB). Glu-260 is a binding site for L-aspartate. An aspartate region spans residues 282–285 (QLHK). Arg-304 serves as a coordination point for L-aspartate. ATP-binding positions include 304-306 (RAE), 312-314 (RHL), and Glu-455. Mg(2+)-binding residues include Glu-455 and Ser-458. L-aspartate is bound by residues Ser-458 and Arg-462. ATP is bound at residue 503 to 506 (GLER).

It belongs to the class-II aminoacyl-tRNA synthetase family. Type 2 subfamily.

It localises to the cytoplasm. It is found in the cytosol. It carries out the reaction tRNA(Asp) + L-aspartate + ATP = L-aspartyl-tRNA(Asp) + AMP + diphosphate. Its function is as follows. Catalyzes the specific attachment of an amino acid to its cognate tRNA in a 2 step reaction: the amino acid (AA) is first activated by ATP to form AA-AMP and then transferred to the acceptor end of the tRNA. In Arabidopsis thaliana (Mouse-ear cress), this protein is Aspartate--tRNA ligase 1, cytoplasmic.